The chain runs to 440 residues: D-serine dehydratase (440 aa).

N6-(pyridoxal phosphate)lysine is present on Lys-116.

The protein belongs to the serine/threonine dehydratase family. DsdA subfamily. Monomer. Pyridoxal 5'-phosphate is required as a cofactor.

It catalyses the reaction D-serine = pyruvate + NH4(+). The chain is D-serine dehydratase from Salmonella typhimurium (strain LT2 / SGSC1412 / ATCC 700720).